The sequence spans 399 residues: MNIRTLDDLLAEEVTGRRVLVRADLNVPLDKQTGQITDDGRIRAVLPTLGALVQAGAKVVVCSHLGRPKGSPDPAFSLRPVAGRLGELLGAPVHFAEDTVGDSARSTVAGLADGQVALLENLRFNPGETSKDEAQRGAFADQLAALADAYVDDAFGAVHRRHASVYDVPARLPHVAGRLVLREVEVLGTLTGEPDRPYVVVLGGSKVSDKLAVIEALLPKVDRLLVGGGMCFTFLKAQGHEVGSSLLEEEMVETCRSLLERAGGKIMLPVDVVAADAFAPDAPHDTVRADGIPSKRVGLDIGPETVAGFAAALRGARTIFWNGPMGVFEMAAFAHGTCGVAEAIANADAFTVVGGGDSAAAVRALGLDEQAFSHISTGGGASLEYLEGKTLPGIAALEN.

Substrate-binding positions include 24-26, Arg-41, 64-67, Arg-123, and Arg-160; these read DLN and HLGR. ATP contacts are provided by residues Lys-210, Gly-298, Glu-329, and 355-358; that span reads GGDS.

The protein belongs to the phosphoglycerate kinase family. As to quaternary structure, monomer.

Its subcellular location is the cytoplasm. The enzyme catalyses (2R)-3-phosphoglycerate + ATP = (2R)-3-phospho-glyceroyl phosphate + ADP. The protein operates within carbohydrate degradation; glycolysis; pyruvate from D-glyceraldehyde 3-phosphate: step 2/5. This Salinispora arenicola (strain CNS-205) protein is Phosphoglycerate kinase.